The primary structure comprises 147 residues: Protein LOL4 (147 aa).

Putative zinc finger stretches follow at residues 4–34, 44–74, and 82–112; these read QLIC…LTAV, ELIC…LNST, and HLTC…VNHV.

The protein resides in the nucleus. In terms of biological role, putative zinc finger that may be involved in programmed cell death and defense response. This chain is Protein LOL4 (LOL4), found in Oryza sativa subsp. japonica (Rice).